We begin with the raw amino-acid sequence, 218 residues long: LexA repressor (218 aa).

The segment at residues 31 to 51 is a DNA-binding region (H-T-H motif); sequence IREIQDGLRISSTSVVAYNLR. Residues serine 137 and lysine 176 each act as for autocatalytic cleavage activity in the active site.

Belongs to the peptidase S24 family. As to quaternary structure, homodimer.

The catalysed reaction is Hydrolysis of Ala-|-Gly bond in repressor LexA.. Represses a number of genes involved in the response to DNA damage (SOS response), including recA and lexA. In the presence of single-stranded DNA, RecA interacts with LexA causing an autocatalytic cleavage which disrupts the DNA-binding part of LexA, leading to derepression of the SOS regulon and eventually DNA repair. This chain is LexA repressor, found in Roseiflexus sp. (strain RS-1).